Consider the following 129-residue polypeptide: Lysozyme C-3 (129 aa).

The 129-residue stretch at 1 to 129 (KVYERCELAA…VSRWIRGCRL (129 aa)) folds into the C-type lysozyme domain. Cystine bridges form between cysteine 6–cysteine 127, cysteine 30–cysteine 115, cysteine 64–cysteine 80, and cysteine 76–cysteine 94. Catalysis depends on residues glutamate 35 and aspartate 52.

The protein belongs to the glycosyl hydrolase 22 family.

It localises to the secreted. It catalyses the reaction Hydrolysis of (1-&gt;4)-beta-linkages between N-acetylmuramic acid and N-acetyl-D-glucosamine residues in a peptidoglycan and between N-acetyl-D-glucosamine residues in chitodextrins.. In terms of biological role, lysozymes have primarily a bacteriolytic function; those in tissues and body fluids are associated with the monocyte-macrophage system and enhance the activity of immunoagents. The chain is Lysozyme C-3 from Anas platyrhynchos (Mallard).